A 344-amino-acid polypeptide reads, in one-letter code: Oxygen sensor histidine kinase NreB (344 aa).

[4Fe-4S] cluster contacts are provided by Cys-58, Cys-61, Cys-73, and Cys-76. Residues 152-344 enclose the Histidine kinase domain; sequence RISRELHDSV…GTNVTLNIPI (193 aa). The residue at position 158 (His-158) is a Phosphohistidine; by autocatalysis.

It depends on [4Fe-4S] cluster as a cofactor. In terms of processing, autophosphorylated.

The protein localises to the cytoplasm. It carries out the reaction ATP + protein L-histidine = ADP + protein N-phospho-L-histidine.. Member of the two-component regulatory system NreB/NreC involved in the control of dissimilatory nitrate/nitrite reduction in response to oxygen. NreB functions as a direct oxygen sensor histidine kinase which is autophosphorylated, in the absence of oxygen, probably at the conserved histidine residue, and transfers its phosphate group probably to a conserved aspartate residue of NreC. NreB/NreC activates the expression of the nitrate (narGHJI) and nitrite (nir) reductase operons, as well as the putative nitrate transporter gene narT. This chain is Oxygen sensor histidine kinase NreB (nreB), found in Staphylococcus aureus (strain Mu3 / ATCC 700698).